The primary structure comprises 321 residues: Protein ABIL3 (321 aa).

2 disordered regions span residues 179 to 273 (TIRE…RSAS) and 279 to 298 (EKEAQKEPEHQQQPSKSKRL). Composition is skewed to low complexity over residues 204–215 (SATFSFSSIATA) and 240–255 (IRPSSISRPTTPSKSR). The span at 279 to 288 (EKEAQKEPEH) shows a compositional bias: basic and acidic residues.

Belongs to the ABI family. Binds SCAR.

It localises to the cytoplasm. Its subcellular location is the cytoskeleton. In terms of biological role, involved in regulation of actin and microtubule organization. Part of a WAVE complex that activates the Arp2/3 complex. The sequence is that of Protein ABIL3 (ABIL3) from Arabidopsis thaliana (Mouse-ear cress).